The primary structure comprises 222 residues: Peptide methionine sulfoxide reductase MsrA (222 aa).

Cysteine 60 is an active-site residue.

Belongs to the MsrA Met sulfoxide reductase family.

It carries out the reaction L-methionyl-[protein] + [thioredoxin]-disulfide + H2O = L-methionyl-(S)-S-oxide-[protein] + [thioredoxin]-dithiol. It catalyses the reaction [thioredoxin]-disulfide + L-methionine + H2O = L-methionine (S)-S-oxide + [thioredoxin]-dithiol. Its function is as follows. Has an important function as a repair enzyme for proteins that have been inactivated by oxidation. Catalyzes the reversible oxidation-reduction of methionine sulfoxide in proteins to methionine. This is Peptide methionine sulfoxide reductase MsrA from Pseudomonas entomophila (strain L48).